A 520-amino-acid polypeptide reads, in one-letter code: Alkyl hydroperoxide reductase subunit F (520 aa).

213–228 (DVLVVGGGPAGAAAAI) provides a ligand contact to FAD. Cys343 and Cys346 are joined by a disulfide. 355–369 (RVAVIGGGNSGVEAA) lines the NAD(+) pocket. 476–486 (TSIPGVFAAGD) lines the FAD pocket.

Belongs to the class-II pyridine nucleotide-disulfide oxidoreductase family. In terms of assembly, homodimer. It depends on FAD as a cofactor.

In terms of biological role, serves to protect the cell against DNA damage by alkyl hydroperoxides. It can use either NADH or NADPH as electron donor for direct reduction of redox dyes or of alkyl hydroperoxides when combined with the AhpC protein. The sequence is that of Alkyl hydroperoxide reductase subunit F (ahpF) from Pseudomonas putida (Arthrobacter siderocapsulatus).